The chain runs to 234 residues: (5-formylfuran-3-yl)methyl phosphate synthase (234 aa).

The active-site Schiff-base intermediate with substrate is Lys27. The active-site Proton acceptor is Lys85.

Belongs to the MfnB family.

It carries out the reaction 2 D-glyceraldehyde 3-phosphate = 4-(hydroxymethyl)-2-furancarboxaldehyde phosphate + phosphate + 2 H2O. Its pathway is cofactor biosynthesis; methanofuran biosynthesis. Functionally, catalyzes the formation of 4-(hydroxymethyl)-2-furancarboxaldehyde phosphate (4-HFC-P) from two molecules of glyceraldehyde-3-P (GA-3-P). The chain is (5-formylfuran-3-yl)methyl phosphate synthase from Methanosarcina mazei (strain ATCC BAA-159 / DSM 3647 / Goe1 / Go1 / JCM 11833 / OCM 88) (Methanosarcina frisia).